The following is a 200-amino-acid chain: Snake venom metalloproteinase rhomb-I (200 aa).

Residues K4–P200 form the Peptidase M12B domain. Ca(2+)-binding residues include E7 and D91. Intrachain disulfides connect C115/C195, C155/C179, and C157/C162. H140 is a binding site for Zn(2+). The active site involves E141. Zn(2+) contacts are provided by H144 and H150. Ca(2+) is bound by residues C195 and N198.

Monomer. Zn(2+) is required as a cofactor. In terms of tissue distribution, expressed by the venom gland.

The protein localises to the secreted. Functionally, snake venom zinc metalloproteinase that induces hemorrhage. The chain is Snake venom metalloproteinase rhomb-I from Lachesis muta rhombeata (Bushmaster).